Here is a 323-residue protein sequence, read N- to C-terminus: ATP synthase gamma chain (323 aa).

It belongs to the ATPase gamma chain family. F-type ATPases have 2 components, CF(1) - the catalytic core - and CF(0) - the membrane proton channel. CF(1) has five subunits: alpha(3), beta(3), gamma(1), delta(1), epsilon(1). CF(0) has three main subunits: a, b and c.

The protein resides in the cell inner membrane. Functionally, produces ATP from ADP in the presence of a proton gradient across the membrane. The gamma chain is believed to be important in regulating ATPase activity and the flow of protons through the CF(0) complex. This Rickettsia africae (strain ESF-5) protein is ATP synthase gamma chain.